The following is a 3658-amino-acid chain: E3 ubiquitin-protein ligase UPL2 (3658 aa).

A compositionally biased stretch (basic and acidic residues) spans 884 to 893; it reads DEKKSVDRAS. Positions 884–914 are disordered; sequence DEKKSVDRASDNSVSASSSTAERESDEDSSN. A compositionally biased stretch (low complexity) spans 894-903; the sequence is DNSVSASSST. In terms of domain architecture, UBA spans 1271–1312; that stretch reads QPDEAIVGMIVEMGFSRSRAEDALRRVGTNSVEMAMDWLFTN. One can recognise a UIM domain in the interval 1318 to 1337; sequence QEDDELAQALALSLGNSSET. 9 disordered regions span residues 1331–1360, 1702–1733, 2004–2038, 2052–2072, 2113–2204, 2293–2313, 2417–2487, 2503–2591, and 2958–2987; these read LGNSSETPKLEDTEKPVDVPQEEAEPKEPP, VSGSEHGFSLNEPLGISENKLHDGSGKCSKSH, AEQLKSEVPNEQKNTDSDERHDSHGTSTSTEVDEL, VDNGQEQPQVSSQSEGERGSS, HVED…DDMV, PLFSRPSQTGNTASVSASAGS, ERET…EGGG, SAQG…PEVN, and SPSSGVPEKLENKPVGEEASSETQKDAESE. Basic and acidic residues predominate over residues 1338 to 1347; it reads PKLEDTEKPV. The span at 2007–2027 shows a compositional bias: basic and acidic residues; the sequence is LKSEVPNEQKNTDSDERHDSH. Positions 2028–2038 are enriched in polar residues; sequence GTSTSTEVDEL. Composition is skewed to acidic residues over residues 2117–2144 and 2156–2204; these read RADDDVDDDMDDEGEDDEGDDEDADSVE and DVED…DDMV. A compositionally biased stretch (polar residues) spans 2297–2313; sequence RPSQTGNTASVSASAGS. Low complexity predominate over residues 2422-2431; sequence TTEVQEQQQP. Residues 2503–2518 show a composition bias toward polar residues; the sequence is SAQGQSDTSGIQNVSV. The residue at position 2582 (Ser2582) is a Phosphoserine. The HECT domain occupies 3317–3658; the sequence is SPQDLKGRLN…HEANEGFGFA (342 aa). The Glycyl thioester intermediate role is filled by Cys3625.

The protein belongs to the UPL family. TOM1/PTR1 subfamily. As to expression, widely expressed. Expressed in root, stem, cauline and rosette leaf, seedling and flower (at protein level).

The enzyme catalyses S-ubiquitinyl-[E2 ubiquitin-conjugating enzyme]-L-cysteine + [acceptor protein]-L-lysine = [E2 ubiquitin-conjugating enzyme]-L-cysteine + N(6)-ubiquitinyl-[acceptor protein]-L-lysine.. It participates in protein modification; protein ubiquitination. Functionally, probable E3 ubiquitin-protein ligase which mediates ubiquitination and subsequent proteasomal degradation of target proteins. This is E3 ubiquitin-protein ligase UPL2 (UPL2) from Arabidopsis thaliana (Mouse-ear cress).